Consider the following 80-residue polypeptide: EMBRYO SURROUNDING FACTOR 1-like protein 1 (80 aa).

An N-terminal signal peptide occupies residues M1 to C22. 4 cysteine pairs are disulfide-bonded: C38–C52, C43–C78, C50–C74, and C53–C64.

This sequence belongs to the MEG family. Expressed in leaves.

The sequence is that of EMBRYO SURROUNDING FACTOR 1-like protein 1 (ESFL1) from Arabidopsis thaliana (Mouse-ear cress).